The chain runs to 81 residues: MQSLQVLAIVALVVATIIAIVVWTIVFIEYRKILRQRKIDRLINRITERAEDSGNESDGDQEELSALVERGHLAPWDVDDL.

Residues 1–7 (MQSLQVL) lie on the Extracellular side of the membrane. A helical membrane pass occupies residues 8-28 (AIVALVVATIIAIVVWTIVFI). Residues 29 to 81 (EYRKILRQRKIDRLINRITERAEDSGNESDGDQEELSALVERGHLAPWDVDDL) are Cytoplasmic-facing. The tract at residues 50-81 (AEDSGNESDGDQEELSALVERGHLAPWDVDDL) is disordered. Phosphoserine; by host CK2 occurs at positions 53 and 57. Residues 53–63 (SGNESDGDQEE) show a composition bias toward acidic residues.

This sequence belongs to the HIV-1 VPU protein family. As to quaternary structure, homopentamer. Interacts with host CD4 and BRTC; these interactions induce proteasomal degradation of CD4. Interacts with host BST2; this interaction leads to the degradation of host BST2. Interacts with host FBXW11. Interacts with host AP1M1; this interaction plays a role in the mistrafficking and subsequent degradation of host BST2. Interacts with host RANBP2; this interaction allows Vpu to down-regulate host BLM sumoylation. Phosphorylated by host CK2. This phosphorylation is necessary for interaction with human BTRC and degradation of CD4.

It is found in the host membrane. With respect to regulation, ion channel activity is inhibited by hexamethylene amiloride in vitro. In terms of biological role, enhances virion budding by targeting host CD4 and Tetherin/BST2 to proteasome degradation. Degradation of CD4 prevents any unwanted premature interactions between viral Env and its host receptor CD4 in the endoplasmic reticulum. Degradation of antiretroviral protein Tetherin/BST2 is important for virion budding, as BST2 tethers new viral particles to the host cell membrane. Mechanistically, Vpu bridges either CD4 or BST2 to BTRC, a substrate recognition subunit of the Skp1/Cullin/F-box protein E3 ubiquitin ligase, induces their ubiquitination and subsequent proteasomal degradation. The alteration of the E3 ligase specificity by Vpu seems to promote the degradation of host IKBKB, leading to NF-kappa-B down-regulation and subsequent apoptosis. Acts as a viroporin that forms an oligomeric ion channel in membranes. Modulates the host DNA repair mechanisms to promote degradation of nuclear viral cDNA in cells that are already productively infected in order to suppress immune sensing and proviral hyper-integration (superinfection). Manipulates PML-NBs and modulates SUMOylation of host BLM protein thereby enhancing its DNA-end processing activity toward viral unintegrated linear DNA. Also inhibits RAD52-mediated homologous repair of viral cDNA, preventing the generation of dead-end circular forms of single copies of the long terminal repeat and permitting sustained nucleolytic attack. The protein is Protein Vpu of Human immunodeficiency virus type 1 group M subtype B (isolate YU-2) (HIV-1).